The following is a 240-amino-acid chain: ATP-dependent dethiobiotin synthetase BioD (240 aa).

15-20 lines the ATP pocket; it reads EIGKTF. Threonine 19 serves as a coordination point for Mg(2+). The active site involves lysine 40. ATP-binding positions include aspartate 57, 118-121, and 178-179; these read EGVG and NR. The Mg(2+) site is built by aspartate 57 and glutamate 118.

Belongs to the dethiobiotin synthetase family. Homodimer. Mg(2+) serves as cofactor.

The protein resides in the cytoplasm. It catalyses the reaction (7R,8S)-7,8-diammoniononanoate + CO2 + ATP = (4R,5S)-dethiobiotin + ADP + phosphate + 3 H(+). It participates in cofactor biosynthesis; biotin biosynthesis; biotin from 7,8-diaminononanoate: step 1/2. Its function is as follows. Catalyzes a mechanistically unusual reaction, the ATP-dependent insertion of CO2 between the N7 and N8 nitrogen atoms of 7,8-diaminopelargonic acid (DAPA, also called 7,8-diammoniononanoate) to form a ureido ring. This chain is ATP-dependent dethiobiotin synthetase BioD, found in Burkholderia thailandensis (strain ATCC 700388 / DSM 13276 / CCUG 48851 / CIP 106301 / E264).